We begin with the raw amino-acid sequence, 417 residues long: NADH-quinone oxidoreductase subunit D (417 aa).

It belongs to the complex I 49 kDa subunit family. NDH-1 is composed of 14 different subunits. Subunits NuoB, C, D, E, F, and G constitute the peripheral sector of the complex.

It is found in the cell inner membrane. It carries out the reaction a quinone + NADH + 5 H(+)(in) = a quinol + NAD(+) + 4 H(+)(out). In terms of biological role, NDH-1 shuttles electrons from NADH, via FMN and iron-sulfur (Fe-S) centers, to quinones in the respiratory chain. The immediate electron acceptor for the enzyme in this species is believed to be ubiquinone. Couples the redox reaction to proton translocation (for every two electrons transferred, four hydrogen ions are translocated across the cytoplasmic membrane), and thus conserves the redox energy in a proton gradient. This chain is NADH-quinone oxidoreductase subunit D, found in Francisella tularensis subsp. tularensis (strain FSC 198).